Reading from the N-terminus, the 311-residue chain is MFQHKTVLLRETVDGLNIKPDGTYVDCTLGGAGHSTYLLQQLSEKGRLIAFDQDDTALENAKKTLSEYKGQLILVKSNFRYLKECLHEHGITSVDGILFDLGVSSPQLDTPERGFSYHHDAPLDMRMDQSAALTAKEVVNEWRYEDLVRIFFKYGEEKFSKQIARKIEEAREKSPIQTTGQLVDLIKDAIPAPARRSGGHPAKRVFQAIRIAVNDELQVFEEALLQAIEVLKPGGRVSVITFHSLEDRMCKMTFKEKSSLPELPPGLPVIPEEFEPELKLITRKPITASKEELEENNRARSAKLRIAEKRK.

Residues 32–34, Asp-52, Phe-79, Asp-100, and Gln-107 contribute to the S-adenosyl-L-methionine site; that span reads AGH. A compositionally biased stretch (basic and acidic residues) spans 289 to 298; that stretch reads SKEELEENNR. The interval 289 to 311 is disordered; the sequence is SKEELEENNRARSAKLRIAEKRK. Positions 300–311 are enriched in basic residues; the sequence is RSAKLRIAEKRK.

It belongs to the methyltransferase superfamily. RsmH family.

The protein resides in the cytoplasm. It catalyses the reaction cytidine(1402) in 16S rRNA + S-adenosyl-L-methionine = N(4)-methylcytidine(1402) in 16S rRNA + S-adenosyl-L-homocysteine + H(+). Its function is as follows. Specifically methylates the N4 position of cytidine in position 1402 (C1402) of 16S rRNA. The protein is Ribosomal RNA small subunit methyltransferase H of Bacillus velezensis (strain DSM 23117 / BGSC 10A6 / LMG 26770 / FZB42) (Bacillus amyloliquefaciens subsp. plantarum).